The following is a 288-amino-acid chain: Syntaxin-1A (288 aa).

Residues 1-13 (MKDRTQELRTAKD) show a composition bias toward basic and acidic residues. Residues 1 to 20 (MKDRTQELRTAKDSDDDDDV) are disordered. Residues 1-265 (MKDRTQELRT…KYQSKARRKK (265 aa)) are Cytoplasmic-facing. 3 positions are modified to phosphoserine: S14, S64, and S95. A coiled-coil region spans residues 68–109 (DEKTKEELEELMSDIKKTANKVRSKLKSIEQSIEQEEGLNRS). S188 bears the Phosphoserine; by DAPK1 mark. The t-SNARE coiled-coil homology domain occupies 192–254 (LSEIETRHSE…ERAVSDTKKA (63 aa)). Residues K252, K253, and K256 each participate in a glycyl lysine isopeptide (Lys-Gly) (interchain with G-Cter in SUMO) cross-link. Residues 266–288 (IMIVICCVVLGIVIASTFGGIFG) form a helical; Anchor for type IV membrane protein membrane-spanning segment.

It belongs to the syntaxin family. As to quaternary structure, part of the SNARE core complex containing SNAP25, VAMP2 and STX1A; this complex constitutes the basic catalytic machinery of the complex neurotransmitter release apparatus. The SNARE complex interacts with CPLX1. Interacts with STXBP1. The interaction with STXBP1 promotes assembly of the SNARE complex. Interacts (via C-terminus) with KCNB1 (via C-terminus); the interaction increases in a calcium-dependent manner and induces a pore-independent enhancement of exocytosis in neuroendocrine cells, chromaffin cells, pancreatic beta cells and from the soma of dorsal root ganglia (DRG) neurons. Interacts with SYTL4. Interacts with STXBP6. Interacts with PLCL1 (via C2 domain). Interacts with OTOF. Interacts with LGI3. Interacts (via the H3 domain) with SLC6A4 (via the N-terminus); this interaction regulates SLC4A6 channel conductance in thalamocortical neurons. Interacts with SYT6 and SYT8; the interaction is Ca(2+)-dependent. Interacts with VAMP8. Interacts with SNAP23. Interacts with VAPA and SYBU. Interacts with PRRT2. Interacts with SEPT8. Interacts with STXBP5L. Interacts with synaptotagmin-1/SYT1. Interacts with SEPTIN5; in the cerebellar cortex. Interacts with SEPTIN4; in the striatum. Phosphorylated by CK2. Phosphorylation at Ser-188 by DAPK1 significantly decreases its interaction with STXBP1. In terms of processing, sumoylated, sumoylation is required for regulation of synaptic vesicle endocytosis. Post-translationally, (Microbial infection) Targeted and hydrolyzed by C.botulinum neurotoxin type C (BoNT/C) which inhibits neurotransmitter release. Probably hydrolyzes the 253-Lys-|-Ala-254 bond.

The protein localises to the cytoplasmic vesicle. It localises to the secretory vesicle. The protein resides in the synaptic vesicle membrane. Its subcellular location is the synapse. It is found in the synaptosome. The protein localises to the cell membrane. Its function is as follows. Plays an essential role in hormone and neurotransmitter calcium-dependent exocytosis and endocytosis. Part of the SNARE (Soluble NSF Attachment Receptor) complex composed of SNAP25, STX1A and VAMP2 which mediates the fusion of synaptic vesicles with the presynaptic plasma membrane. STX1A and SNAP25 are localized on the plasma membrane while VAMP2 resides in synaptic vesicles. The pairing of the three SNAREs from the N-terminal SNARE motifs to the C-terminal anchors leads to the formation of the SNARE complex, which brings membranes into close proximity and results in final fusion. Participates in the calcium-dependent regulation of acrosomal exocytosis in sperm. Also plays an important role in the exocytosis of hormones such as insulin or glucagon-like peptide 1 (GLP-1). This chain is Syntaxin-1A (STX1A), found in Bos taurus (Bovine).